The primary structure comprises 596 residues: Beta-fructofuranosidase, insoluble isoenzyme 6 (596 aa).

The signal sequence occupies residues 1–25 (MALAGLPLSVFAIAVHFCLVFSSSS). Residues 49 to 52 (WQND), Gln68, and Trp76 contribute to the substrate site. The active site involves Asp52. Residue Asn80 is glycosylated (N-linked (GlcNAc...) asparagine). Substrate is bound by residues 113 to 114 (AS), 177 to 178 (RD), and Glu232. The N-linked (GlcNAc...) asparagine glycan is linked to Asn335. An intrachain disulfide couples Cys436 to Cys482. N-linked (GlcNAc...) asparagine glycosylation is present at Asn556.

Belongs to the glycosyl hydrolase 32 family. In terms of tissue distribution, expressed in roots. Weakly expressed in flowers.

The protein localises to the secreted. It localises to the extracellular space. It is found in the apoplast. The protein resides in the cell wall. The catalysed reaction is Hydrolysis of terminal non-reducing beta-D-fructofuranoside residues in beta-D-fructofuranosides.. The sequence is that of Beta-fructofuranosidase, insoluble isoenzyme 6 (CIN6) from Oryza sativa subsp. japonica (Rice).